Reading from the N-terminus, the 206-residue chain is Flavin prenyltransferase UbiX (206 aa).

FMN contacts are provided by residues G11–S13, S37, S103–T106, and R138. The dimethylallyl phosphate site is built by Y168 and R184.

The protein belongs to the UbiX/PAD1 family.

It carries out the reaction dimethylallyl phosphate + FMNH2 = prenylated FMNH2 + phosphate. Functionally, flavin prenyltransferase that catalyzes the synthesis of the prenylated FMN cofactor (prenyl-FMN) for 4-hydroxy-3-polyprenylbenzoic acid decarboxylase UbiD. The prenyltransferase is metal-independent and links a dimethylallyl moiety from dimethylallyl monophosphate (DMAP) to the flavin N5 and C6 atoms of FMN. The protein is Flavin prenyltransferase UbiX of Synechocystis sp. (strain ATCC 27184 / PCC 6803 / Kazusa).